A 405-amino-acid polypeptide reads, in one-letter code: Glucose-1-phosphate adenylyltransferase 1 (405 aa).

Alpha-D-glucose 1-phosphate is bound by residues Y96, G161, 176 to 177 (EK), and S194.

This sequence belongs to the bacterial/plant glucose-1-phosphate adenylyltransferase family. As to quaternary structure, homotetramer.

The enzyme catalyses alpha-D-glucose 1-phosphate + ATP + H(+) = ADP-alpha-D-glucose + diphosphate. It participates in glycan biosynthesis; glycogen biosynthesis. In terms of biological role, involved in the biosynthesis of ADP-glucose, a building block required for the elongation reactions to produce glycogen. Catalyzes the reaction between ATP and alpha-D-glucose 1-phosphate (G1P) to produce pyrophosphate and ADP-Glc. This is Glucose-1-phosphate adenylyltransferase 1 from Vibrio vulnificus (strain CMCP6).